Reading from the N-terminus, the 287-residue chain is Phycobilisome 32.1 kDa linker polypeptide, phycocyanin-associated, rod (287 aa).

The 179-residue stretch at 2 to 180 (AITAAASRLG…LYRGYANSDR (179 aa)) folds into the PBS-linker domain. Residues 235 to 287 (GRVYRIEVAGIRQPGYPGVRRSSTAFLVPYEQLSAKMQQLQRTGARIISVNPA) enclose the CpcD-like domain.

The protein belongs to the phycobilisome linker protein family.

The protein resides in the cellular thylakoid membrane. Its function is as follows. Rod linker protein, associated with phycocyanin. Linker polypeptides determine the state of aggregation and the location of the disk-shaped phycobiliprotein units within the phycobilisome and modulate their spectroscopic properties in order to mediate a directed and optimal energy transfer. The sequence is that of Phycobilisome 32.1 kDa linker polypeptide, phycocyanin-associated, rod (cpcC) from Thermosynechococcus vestitus (strain NIES-2133 / IAM M-273 / BP-1).